The following is a 215-amino-acid chain: Redox-sensing transcriptional repressor Rex (215 aa).

The segment at residues 18–57 is a DNA-binding region (H-T-H motif); it reads LYYRFLKNLHASGKQRVSSAELSDAVKVDSATIRRDFSYF. Residue 92-97 coordinates NAD(+); it reads GVGNLG.

This sequence belongs to the transcriptional regulatory Rex family. As to quaternary structure, homodimer.

The protein localises to the cytoplasm. In terms of biological role, modulates transcription in response to changes in cellular NADH/NAD(+) redox state. This is Redox-sensing transcriptional repressor Rex from Bacillus velezensis (strain DSM 23117 / BGSC 10A6 / LMG 26770 / FZB42) (Bacillus amyloliquefaciens subsp. plantarum).